Here is a 406-residue protein sequence, read N- to C-terminus: WD repeat and SOCS box-containing protein 2 (406 aa).

Positions 70 to 89 (AKSRSSKNETKGRGSPKEKT) are disordered. WD repeat units lie at residues 107–150 (PPSK…LLLN), 153–193 (GHQD…KQIQ), 197–236 (GHLQ…LIRK), 239–278 (GHQS…RLRS), and 293–332 (VHIS…PIAF). One can recognise an SOCS box domain in the interval 358 to 406 (HVQFWTAPRVLSSLKHLCRKALRSFLTTYQVLALPIPKKMKEFLTYRTF).

It functions in the pathway protein modification; protein ubiquitination. Its function is as follows. May be a substrate-recognition component of a SCF-like ECS (Elongin-Cullin-SOCS-box protein) E3 ubiquitin ligase complex which mediates the ubiquitination and subsequent proteasomal degradation of target proteins. The polypeptide is WD repeat and SOCS box-containing protein 2 (WSB2) (Bos taurus (Bovine)).